Reading from the N-terminus, the 312-residue chain is Zinc import ATP-binding protein ZnuC (312 aa).

The ABC transporter domain occupies 13–228 (VSLEDVGVLR…PEYVRLFGSR (216 aa)). 45–52 (GPNGSGKS) is an ATP binding site. The disordered stretch occupies residues 241–312 (DHTHLPDGRV…HSRSGEGRHA (72 aa)). Over residues 243-312 (THLPDGRVLH…HSRSGEGRHA (70 aa)) the composition is skewed to basic and acidic residues.

Belongs to the ABC transporter superfamily. Zinc importer (TC 3.A.1.15.5) family. The complex is composed of two ATP-binding proteins (ZnuC), two transmembrane proteins (ZnuB) and a solute-binding protein (ZnuA).

It localises to the cell inner membrane. The catalysed reaction is Zn(2+)(out) + ATP(in) + H2O(in) = Zn(2+)(in) + ADP(in) + phosphate(in) + H(+)(in). In terms of biological role, part of the ABC transporter complex ZnuABC involved in zinc import. Responsible for energy coupling to the transport system. The protein is Zinc import ATP-binding protein ZnuC of Rhizobium etli (strain ATCC 51251 / DSM 11541 / JCM 21823 / NBRC 15573 / CFN 42).